The primary structure comprises 215 residues: Probable phosphoglycerate mutase GpmB (215 aa).

Residues 8 to 15 (RHGETQWN), 21 to 22 (QG), R58, 82 to 85 (ELDM), 104 to 105 (RR), and 151 to 152 (GI) contribute to the substrate site. Residue H9 is the Tele-phosphohistidine intermediate of the active site. Residue E82 is the Proton donor/acceptor of the active site.

The protein belongs to the phosphoglycerate mutase family. GpmB subfamily.

The catalysed reaction is (2R)-2-phosphoglycerate = (2R)-3-phosphoglycerate. It participates in carbohydrate degradation; glycolysis; pyruvate from D-glyceraldehyde 3-phosphate: step 3/5. This Enterobacter sp. (strain 638) protein is Probable phosphoglycerate mutase GpmB.